The following is a 258-amino-acid chain: MANLAQPAAKELAGHPLVVIPARMASTRLPGKPLADICGTPMIVQVWRRAMEAGVGRVVVAAAEKEIADAVREAGGEAVLTDPDLPSGSDRVWQAVCEVDPEGHHTVILNVQGDLPTLDPALIRTAYEALVRPGADISTLAATITVEEERTNPNVVKAVASFGEGRLARALYFTRATAPWGEGPLYHHIGLYGYRREALARFVALPPSPLEVREKLEQLRALEAGMAIEVALVDTVPLGVDTPADLEKARAALARRSV.

Belongs to the KdsB family.

It localises to the cytoplasm. It catalyses the reaction 3-deoxy-alpha-D-manno-oct-2-ulosonate + CTP = CMP-3-deoxy-beta-D-manno-octulosonate + diphosphate. The protein operates within nucleotide-sugar biosynthesis; CMP-3-deoxy-D-manno-octulosonate biosynthesis; CMP-3-deoxy-D-manno-octulosonate from 3-deoxy-D-manno-octulosonate and CTP: step 1/1. It participates in bacterial outer membrane biogenesis; lipopolysaccharide biosynthesis. Activates KDO (a required 8-carbon sugar) for incorporation into bacterial lipopolysaccharide in Gram-negative bacteria. This chain is 3-deoxy-manno-octulosonate cytidylyltransferase, found in Parvibaculum lavamentivorans (strain DS-1 / DSM 13023 / NCIMB 13966).